Reading from the N-terminus, the 500-residue chain is Cytochrome P450 11B1, mitochondrial (500 aa).

The N-terminal 24 residues, 1-24 (MAFRLKSDVRLAGSWLCLRGARAL), are a transit peptide targeting the mitochondrion. Residue Cys447 participates in heme binding.

This sequence belongs to the cytochrome P450 family. It depends on heme as a cofactor.

Its subcellular location is the mitochondrion inner membrane. It carries out the reaction a steroid + 2 reduced [adrenodoxin] + O2 + 2 H(+) = an 11beta-hydroxysteroid + 2 oxidized [adrenodoxin] + H2O. The catalysed reaction is 11-deoxycortisol + 2 reduced [adrenodoxin] + O2 + 2 H(+) = cortisol + 2 oxidized [adrenodoxin] + H2O. It catalyses the reaction 21-hydroxyprogesterone + 2 reduced [adrenodoxin] + O2 + 2 H(+) = corticosterone + 2 oxidized [adrenodoxin] + H2O. The enzyme catalyses 21-hydroxyprogesterone + 2 reduced [adrenodoxin] + O2 + 2 H(+) = 18-hydroxy-11-deoxycorticosterone + 2 oxidized [adrenodoxin] + H2O. It carries out the reaction 21-hydroxyprogesterone + 2 reduced [adrenodoxin] + O2 + 2 H(+) = 19-hydroxy-11-deoxycorticosterone + 2 oxidized [adrenodoxin] + H2O. The catalysed reaction is cortisol + 2 reduced [adrenodoxin] + O2 + 2 H(+) = 18-hydroxycortisol + 2 oxidized [adrenodoxin] + H2O. It catalyses the reaction 11-deoxycortisol + 2 reduced [adrenodoxin] + O2 + 2 H(+) = 18-hydroxy-11-deoxycortisol + 2 oxidized [adrenodoxin] + H2O. Its pathway is steroid biosynthesis; glucocorticoid biosynthesis. It functions in the pathway steroid hormone biosynthesis. Functionally, a cytochrome P450 monooxygenase involved in the biosynthesis of adrenal corticoids. Catalyzes a variety of reactions that are essential for many species, including detoxification, defense, and the formation of endogenous chemicals like steroid hormones. Steroid 11beta, 18- and 19-hydroxylase with preferred regioselectivity at 11beta, then 18, and lastly 19. Catalyzes the hydroxylation of 11-deoxycortisol and 11-deoxycorticosterone (21-hydroxyprogesterone) at 11beta position, yielding cortisol or corticosterone, respectively, but cannot produce aldosterone. Mechanistically, uses molecular oxygen inserting one oxygen atom into a substrate for hydroxylation and reducing the second into a water molecule. Two electrons are provided by NADPH via a two-protein mitochondrial transfer system comprising flavoprotein FDXR (adrenodoxin/ferredoxin reductase) and nonheme iron-sulfur protein FDX1 or FDX2 (adrenodoxin/ferredoxin). Due to its lack of 18-oxidation activity, it is incapable of generating aldosterone. Could also be involved in the androgen metabolic pathway. This is Cytochrome P450 11B1, mitochondrial (CYP11B1) from Cavia porcellus (Guinea pig).